Consider the following 505-residue polypeptide: RNA-splicing ligase RtcB homolog (505 aa).

Mn(2+) contacts are provided by aspartate 119, cysteine 122, histidine 227, and histidine 259. 226–230 (NHYAE) serves as a coordination point for GMP. Serine 300 carries the post-translational modification Phosphoserine. Histidine 353 contacts Mn(2+). GMP contacts are provided by residues 353–354 (HN), 402–405 (GGTM), serine 409, and 428–431 (HGAG). The active-site GMP-histidine intermediate is the histidine 428. A Glycyl lysine isopeptide (Lys-Gly) (interchain with G-Cter in SUMO2) cross-link involves residue lysine 496. Lysine 504 serves as a coordination point for GMP.

The protein belongs to the RtcB family. As to quaternary structure, catalytic component of the tRNA-splicing ligase complex. Mn(2+) is required as a cofactor.

The protein localises to the nucleus. It is found in the cytoplasm. The enzyme catalyses a 3'-end 3'-phospho-ribonucleotide-RNA + a 5'-end dephospho-ribonucleoside-RNA + GTP = a ribonucleotidyl-ribonucleotide-RNA + GMP + diphosphate. It carries out the reaction a 3'-end 2',3'-cyclophospho-ribonucleotide-RNA + a 5'-end dephospho-ribonucleoside-RNA + GTP + H2O = a ribonucleotidyl-ribonucleotide-RNA + GMP + diphosphate + H(+). Catalytic subunit of the tRNA-splicing ligase complex that acts by directly joining spliced tRNA halves to mature-sized tRNAs by incorporating the precursor-derived splice junction phosphate into the mature tRNA as a canonical 3',5'-phosphodiester. May act as an RNA ligase with broad substrate specificity, and may function toward other RNAs. The polypeptide is RNA-splicing ligase RtcB homolog (Bos taurus (Bovine)).